Here is an 841-residue protein sequence, read N- to C-terminus: Translation initiation factor IF-2 (841 aa).

Residues 94–258 (QRSPEEIEAE…HGFQSPTGPV (165 aa)) are disordered. Over residues 96–136 (SPEEIEAERKRELEERRAVENAARQKAEEEAKRRAEEEARR) the composition is skewed to basic and acidic residues. The segment covering 137-173 (QPAAAQPAGTEAVAAPVAPVEAVREAAPVAAAPAPAA) has biased composition (low complexity). Composition is skewed to basic and acidic residues over residues 174–194 (DARKRDEPRRPDKPRADDNNR), 200–217 (DGERKNAPHRASVKEKAP), and 225–234 (TTDEESDGFR). Basic residues predominate over residues 235 to 248 (RGGRGKAKLKKRNA). The tr-type G domain occupies 341–510 (SRAPVVTVMG…LLQAEVLELK (170 aa)). Positions 350–357 (GHVDHGKT) are G1. GTP is bound at residue 350 to 357 (GHVDHGKT). A G2 region spans residues 375–379 (GITQH). A G3 region spans residues 396–399 (DTPG). GTP contacts are provided by residues 396-400 (DTPGH) and 450-453 (NKID). The segment at 450-453 (NKID) is G4. Residues 486–488 (SAK) form a G5 region.

Belongs to the TRAFAC class translation factor GTPase superfamily. Classic translation factor GTPase family. IF-2 subfamily.

Its subcellular location is the cytoplasm. One of the essential components for the initiation of protein synthesis. Protects formylmethionyl-tRNA from spontaneous hydrolysis and promotes its binding to the 30S ribosomal subunits. Also involved in the hydrolysis of GTP during the formation of the 70S ribosomal complex. The polypeptide is Translation initiation factor IF-2 (Pseudomonas fluorescens (strain SBW25)).